Here is a 310-residue protein sequence, read N- to C-terminus: Probable GTP 3',8-cyclase (310 aa).

Residues lysine 5–arginine 218 form the Radical SAM core domain. Arginine 14 lines the GTP pocket. [4Fe-4S] cluster-binding residues include cysteine 21, cysteine 25, and cysteine 28. Lysine 62 contacts GTP. Glycine 66 contacts S-adenosyl-L-methionine. Threonine 91 contacts GTP. Position 115 (serine 115) interacts with S-adenosyl-L-methionine. Lysine 153 provides a ligand contact to GTP. [4Fe-4S] cluster-binding residues include cysteine 251, cysteine 254, and cysteine 268.

It belongs to the radical SAM superfamily. MoaA family. It depends on [4Fe-4S] cluster as a cofactor.

It carries out the reaction GTP + AH2 + S-adenosyl-L-methionine = (8S)-3',8-cyclo-7,8-dihydroguanosine 5'-triphosphate + 5'-deoxyadenosine + L-methionine + A + H(+). It participates in cofactor biosynthesis; molybdopterin biosynthesis. Its function is as follows. Catalyzes the cyclization of GTP to (8S)-3',8-cyclo-7,8-dihydroguanosine 5'-triphosphate. The protein is Probable GTP 3',8-cyclase of Pyrobaculum aerophilum (strain ATCC 51768 / DSM 7523 / JCM 9630 / CIP 104966 / NBRC 100827 / IM2).